Consider the following 169-residue polypeptide: RNA annealing protein YRA2 (169 aa).

One can recognise an RRM domain in the interval Lys-45 to Gln-119. Residues Gln-119–Ser-169 are disordered.

This sequence belongs to the YRA1 family. As to quaternary structure, associates with mRNPs.

It localises to the nucleus. Involved in export of poly(A) mRNAs from the nucleus. Recruited to the coding sequences as well as poly-A sites of active genes. This is RNA annealing protein YRA2 (YRA2) from Zygosaccharomyces rouxii (strain ATCC 2623 / CBS 732 / NBRC 1130 / NCYC 568 / NRRL Y-229).